The primary structure comprises 90 residues: Interferon alpha-inducible protein 27-like protein 2A (90 aa).

The N-terminal stretch at 1–24 (MLGTLFGSAIGGALAVAGAPVALA) is a signal peptide. The next 2 membrane-spanning stretches (helical) occupy residues 28 to 48 (FTGTGIAAASIAAKMMSAAAI) and 67 to 89 (GVLGLSTSTNAILGAAGAAVGAL).

The protein belongs to the IFI6/IFI27 family. As to quaternary structure, homodimer. Interacts with SKP2. Interacts with NR4A1. May interact with BCL2.

The protein localises to the nucleus inner membrane. Functionally, may be involved in the interferon-induced negative regulation of the transcriptional activity of NR4A1, NR4A2 and NR4A3 through the enhancement of XPO1-mediated nuclear export of these nuclear receptors. Through the regulation of NR4A1 transcriptional activity, may play a role in the vascular response to injury. The protein is Interferon alpha-inducible protein 27-like protein 2A of Mus musculus (Mouse).